Here is a 186-residue protein sequence, read N- to C-terminus: Peptidyl-tRNA hydrolase (186 aa).

A tRNA-binding site is contributed by Y14. Residue H19 is the Proton acceptor of the active site. 3 residues coordinate tRNA: Y61, N63, and N107.

The protein belongs to the PTH family. In terms of assembly, monomer.

The protein localises to the cytoplasm. It carries out the reaction an N-acyl-L-alpha-aminoacyl-tRNA + H2O = an N-acyl-L-amino acid + a tRNA + H(+). Hydrolyzes ribosome-free peptidyl-tRNAs (with 1 or more amino acids incorporated), which drop off the ribosome during protein synthesis, or as a result of ribosome stalling. In terms of biological role, catalyzes the release of premature peptidyl moieties from peptidyl-tRNA molecules trapped in stalled 50S ribosomal subunits, and thus maintains levels of free tRNAs and 50S ribosomes. The chain is Peptidyl-tRNA hydrolase from Helicobacter acinonychis (strain Sheeba).